The following is a 305-amino-acid chain: tRNA dimethylallyltransferase (305 aa).

9–16 contributes to the ATP binding site; sequence GPTASGKS. Position 11–16 (11–16) interacts with substrate; sequence TASGKS. Positions 34 to 37 are interaction with substrate tRNA; sequence DSKQ.

It belongs to the IPP transferase family. Monomer. Mg(2+) is required as a cofactor.

The enzyme catalyses adenosine(37) in tRNA + dimethylallyl diphosphate = N(6)-dimethylallyladenosine(37) in tRNA + diphosphate. Catalyzes the transfer of a dimethylallyl group onto the adenine at position 37 in tRNAs that read codons beginning with uridine, leading to the formation of N6-(dimethylallyl)adenosine (i(6)A). The protein is tRNA dimethylallyltransferase of Anaplasma marginale (strain St. Maries).